Consider the following 356-residue polypeptide: S-adenosylmethionine:tRNA ribosyltransferase-isomerase (356 aa).

The protein belongs to the QueA family. Monomer.

It is found in the cytoplasm. It catalyses the reaction 7-aminomethyl-7-carbaguanosine(34) in tRNA + S-adenosyl-L-methionine = epoxyqueuosine(34) in tRNA + adenine + L-methionine + 2 H(+). Its pathway is tRNA modification; tRNA-queuosine biosynthesis. Functionally, transfers and isomerizes the ribose moiety from AdoMet to the 7-aminomethyl group of 7-deazaguanine (preQ1-tRNA) to give epoxyqueuosine (oQ-tRNA). The sequence is that of S-adenosylmethionine:tRNA ribosyltransferase-isomerase from Yersinia pseudotuberculosis serotype IB (strain PB1/+).